Consider the following 67-residue polypeptide: Large ribosomal subunit protein bL28 (67 aa).

Belongs to the bacterial ribosomal protein bL28 family.

This Nitratiruptor sp. (strain SB155-2) protein is Large ribosomal subunit protein bL28.